The chain runs to 332 residues: Ribose-phosphate pyrophosphokinase (332 aa).

55–57 (DGE) is a binding site for ATP. Mg(2+) contacts are provided by His-148 and Asp-187. Lys-211 is a catalytic residue. D-ribose 5-phosphate is bound by residues Arg-213, Asp-237, and 241–245 (DTGGT).

Belongs to the ribose-phosphate pyrophosphokinase family. Class I subfamily. In terms of assembly, homohexamer. Mg(2+) serves as cofactor.

The protein resides in the cytoplasm. The catalysed reaction is D-ribose 5-phosphate + ATP = 5-phospho-alpha-D-ribose 1-diphosphate + AMP + H(+). It participates in metabolic intermediate biosynthesis; 5-phospho-alpha-D-ribose 1-diphosphate biosynthesis; 5-phospho-alpha-D-ribose 1-diphosphate from D-ribose 5-phosphate (route I): step 1/1. In terms of biological role, involved in the biosynthesis of the central metabolite phospho-alpha-D-ribosyl-1-pyrophosphate (PRPP) via the transfer of pyrophosphoryl group from ATP to 1-hydroxyl of ribose-5-phosphate (Rib-5-P). The sequence is that of Ribose-phosphate pyrophosphokinase from Prochlorococcus marinus (strain MIT 9313).